Here is a 505-residue protein sequence, read N- to C-terminus: Probable Xaa-Pro aminopeptidase Pc16g13390 (505 aa).

4 residues coordinate Mn(2+): Asp-287, Asp-298, Glu-436, and Glu-475.

It belongs to the peptidase M24B family. Requires Mn(2+) as cofactor.

The enzyme catalyses Release of any N-terminal amino acid, including proline, that is linked to proline, even from a dipeptide or tripeptide.. Catalyzes the removal of a penultimate prolyl residue from the N-termini of peptides. In Penicillium rubens (strain ATCC 28089 / DSM 1075 / NRRL 1951 / Wisconsin 54-1255) (Penicillium chrysogenum), this protein is Probable Xaa-Pro aminopeptidase Pc16g13390.